A 263-amino-acid chain; its full sequence is Glutamate racemase (263 aa).

Residues 10–11 (DS) and 42–43 (YG) contribute to the substrate site. The Proton donor/acceptor role is filled by C73. 74–75 (NS) is a substrate binding site. C183 acts as the Proton donor/acceptor in catalysis. Substrate is bound at residue 184–185 (TH).

Belongs to the aspartate/glutamate racemases family.

The catalysed reaction is L-glutamate = D-glutamate. It participates in cell wall biogenesis; peptidoglycan biosynthesis. In terms of biological role, provides the (R)-glutamate required for cell wall biosynthesis. This Acidothermus cellulolyticus (strain ATCC 43068 / DSM 8971 / 11B) protein is Glutamate racemase.